The sequence spans 791 residues: Lon protease (791 aa).

One can recognise a Lon N-terminal domain in the interval 28–223; it reads LPVVVISEIM…YILQDIQSLL (196 aa). 374–381 is an ATP binding site; sequence GPPGVGKT. One can recognise a Lon proteolytic domain in the interval 610-791; it reads KEKIGSTNGL…SDVFSQVFVV (182 aa). Catalysis depends on residues Ser-697 and Lys-740.

This sequence belongs to the peptidase S16 family. In terms of assembly, homohexamer. Organized in a ring with a central cavity.

The protein localises to the cytoplasm. The catalysed reaction is Hydrolysis of proteins in presence of ATP.. ATP-dependent serine protease that mediates the selective degradation of mutant and abnormal proteins as well as certain short-lived regulatory proteins. Required for cellular homeostasis and for survival from DNA damage and developmental changes induced by stress. Degrades polypeptides processively to yield small peptide fragments that are 5 to 10 amino acids long. Binds to DNA in a double-stranded, site-specific manner. In Aster yellows witches'-broom phytoplasma (strain AYWB), this protein is Lon protease.